A 1059-amino-acid polypeptide reads, in one-letter code: MDMLMMWSICLFVCIFMAPFSCGSGSSSRFIQVPESQSIVENDSVDFNCEATTDPSTDLHYEWLHNGHQIVYDKRVYQIGANLHIESVQRGEDVGDYVCIAMSLSSGAREASPTAKLSVIFLDSASVQLLGSNRNELLLKCHVEGASGNEALQIEWYRNSAKLSSWQNIELDEHRLLVRQPTGSDDGLYRCIASNAAGRVMSKQGFVYQHQQQQQAGAKCLPRLKKNQKFLPESWGKQIFLCRGKRGGNVEAGLAPSPEGLRLVQGPDDQITIKEGEPATLSCLYEIPAELQNQRIQLRWRKDGKLLRQVELGASLPRGMGNPHNGHSLDGKDALLREDARLVLHKANGTLSFGTVIASDAGQYQCQLQMEGHLAINSSPGILEVIEQLKFMPQPTSKNLELDAAVAKVHCKAQGTPTPQVQWFRDGVNTTLPDQVEVDLNGTLIFRNVNADHRGNYTCLATNLQGQINATVSINVVVAPKFSVPPNVPMEIAEQSTVVIHCQAIGDPKPTIQWDKDLLYLSENNTDRQRFSFLENGTLEIRNVQAEDEGRYGCTIGNSAGLKREEAVLTVKTSSTGGGGYVTEESSGDGGFLATRAVLITMTVALAYIVLVVGLMLWCRYRRQARKARLNELSIKEAGGEQAGGEGSTSGNPKASEQEPCLGKQQRNGRNGKSKSNGDPQKSDDTACSQQSRASKKSAHIYEQLALPRSGLSELIQIGRGDFGDVFVGKLKASLVNNAQANDKDSDNDKQHSNSENGSGGSSGSTTLSTLNEKRRSKTSMDDIEEIKEEEQEQQQSQQQQQQDQLVMVKALNKVKDEQACQEFRRQLDLLRALSHKGIVRLYGLCREKDPHYLVLEYTDWGDLKQFLLATAGKVNTATTATSSTTPLPPLTTSQVLAVAYQIARGMDAIYRARFTHRDLATRNCVISSEFIVKVSYPALCKDKYSREYHKHRNSLLPIRWLAPECIQEDEYTTKSDIFSYGVVVWELFNQATKLPHEDLTNEQVIEKSQDGTLKWTVAESTPESLKEILLSCWSVNPKQRPSFSQLGAALSKAMQNSE.

An N-terminal signal peptide occupies residues 1–23 (MDMLMMWSICLFVCIFMAPFSCG). Residues 24 to 597 (SGSSSRFIQV…GDGGFLATRA (574 aa)) lie on the Extracellular side of the membrane. Ig-like C2-type domains follow at residues 28 to 112 (SRFI…REAS), 113 to 202 (PTAK…RVMS), 258 to 377 (PEGL…LAIN), 380 to 475 (PGIL…VSIN), and 480 to 570 (PKFS…AVLT). N-linked (GlcNAc...) asparagine glycosylation is present at N42. 4 disulfides stabilise this stretch: C49–C99, C141–C191, C283–C366, and C411–C459. 7 N-linked (GlcNAc...) asparagine glycosylation sites follow: N348, N429, N441, N456, N469, N524, and N536. An intrachain disulfide couples C502 to C554. The helical transmembrane segment at 598–618 (VLITMTVALAYIVLVVGLMLW) threads the bilayer. Residues 619 to 1059 (CRYRRQARKA…ALSKAMQNSE (441 aa)) lie on the Cytoplasmic side of the membrane. The segment at 639-695 (GGEQAGGEGSTSGNPKASEQEPCLGKQQRNGRNGKSKSNGDPQKSDDTACSQQSRAS) is disordered. Positions 665–693 (QQRNGRNGKSKSNGDPQKSDDTACSQQSR) are enriched in polar residues. S698 is subject to Phosphoserine. The Protein kinase; inactive domain occupies 712–1055 (LSELIQIGRG…QLGAALSKAM (344 aa)). Residues 739 to 781 (AQANDKDSDNDKQHSNSENGSGGSSGSTTLSTLNEKRRSKTSM) form a disordered region. The segment covering 742-753 (NDKDSDNDKQHS) has biased composition (basic and acidic residues).

The protein belongs to the protein kinase superfamily. Tyr protein kinase family. Insulin receptor subfamily. As to quaternary structure, interacts with plexA; component of a receptor complex that mediates the repulsive signaling in response to Semaphorin ligands.

The protein resides in the cell membrane. Its function is as follows. Acts as a calcium-dependent, homophilic cell adhesion molecule that regulates neural recognition during the development of the nervous system. Component of the repulsive Plexin signaling response to regulate motor axon guidance at the embryonic stage. Also component of a receptor complex that is required in the adult visual system to innervate the lamina layer; specific targeting of R1-R6 axons. In Drosophila willistoni (Fruit fly), this protein is Tyrosine-protein kinase-like otk.